The primary structure comprises 328 residues: Flap endonuclease 1 (328 aa).

An N-domain region spans residues 1-98 (MGVKFKDITN…ETQEERINIK (98 aa)). The Mg(2+) site is built by Asp-27, Asp-80, Glu-152, Glu-154, Asp-173, Asp-175, and Asp-227. Residues 116-248 (AARKYAARTT…KGIKLIHKYG (133 aa)) form an I-domain region. The interaction with PCNA stretch occupies residues 320 to 328 (AQSSLEDWF).

This sequence belongs to the XPG/RAD2 endonuclease family. FEN1 subfamily. Interacts with PCNA. PCNA stimulates the nuclease activity without altering cleavage specificity. Mg(2+) serves as cofactor.

Functionally, structure-specific nuclease with 5'-flap endonuclease and 5'-3' exonuclease activities involved in DNA replication and repair. During DNA replication, cleaves the 5'-overhanging flap structure that is generated by displacement synthesis when DNA polymerase encounters the 5'-end of a downstream Okazaki fragment. Binds the unpaired 3'-DNA end and kinks the DNA to facilitate 5' cleavage specificity. Cleaves one nucleotide into the double-stranded DNA from the junction in flap DNA, leaving a nick for ligation. Also involved in the base excision repair (BER) pathway. Acts as a genome stabilization factor that prevents flaps from equilibrating into structures that lead to duplications and deletions. Also possesses 5'-3' exonuclease activity on nicked or gapped double-stranded DNA. The sequence is that of Flap endonuclease 1 from Methanosphaera stadtmanae (strain ATCC 43021 / DSM 3091 / JCM 11832 / MCB-3).